The sequence spans 147 residues: Peptide methionine sulfoxide reductase MsrB 2 (147 aa).

In terms of domain architecture, MsrB spans T6–R129. The active-site Nucleophile is C118.

Belongs to the MsrB Met sulfoxide reductase family.

The catalysed reaction is L-methionyl-[protein] + [thioredoxin]-disulfide + H2O = L-methionyl-(R)-S-oxide-[protein] + [thioredoxin]-dithiol. This is Peptide methionine sulfoxide reductase MsrB 2 (msrB2) from Rhizobium meliloti (strain 1021) (Ensifer meliloti).